We begin with the raw amino-acid sequence, 420 residues long: Replication factor C large subunit (420 aa).

ATP is bound at residue 46 to 53; sequence GVQGSGKT.

It belongs to the activator 1 small subunits family. RfcL subfamily. Heteromultimer composed of small subunits (RfcS) and large subunits (RfcL).

Part of the RFC clamp loader complex which loads the PCNA sliding clamp onto DNA. This is Replication factor C large subunit from Thermoplasma volcanium (strain ATCC 51530 / DSM 4299 / JCM 9571 / NBRC 15438 / GSS1).